Here is a 134-residue protein sequence, read N- to C-terminus: Putative esterase PA0474 (134 aa).

This sequence belongs to the thioesterase PaaI family.

This is Putative esterase PA0474 from Pseudomonas aeruginosa (strain ATCC 15692 / DSM 22644 / CIP 104116 / JCM 14847 / LMG 12228 / 1C / PRS 101 / PAO1).